The chain runs to 1492 residues: Copper-transporting ATPase 1 (1492 aa).

At 1 to 645 (MEPNMDANSI…KREIKQWRGS (645 aa)) the chain is on the cytoplasmic side. 2 HMA domains span residues 8-74 (NSIT…FDAL) and 85-151 (TNTV…LDMG). Cu(+) is bound by residues Thr-18, Cys-19, and Cys-22. Thr-152 carries the phosphothreonine modification. The region spanning 171–237 (VLLKMRVEGM…QIEAVGFPAF (67 aa)) is the HMA 3 domain. Cu(+)-binding residues include Cys-182 and Cys-185. Phosphoserine is present on Ser-270. Positions 277–343 (SAITFTIDGM…AIEAVSPGQY (67 aa)) constitute an HMA 4 domain. The Cu(+) site is built by Cys-288 and Cys-291. The residue at position 327 (Thr-327) is a Phosphothreonine. Ser-339, Ser-353, Ser-357, and Ser-362 each carry phosphoserine. HMA domains lie at 377 to 443 (QEVV…FDAV), 480 to 546 (NKCY…FGAV), and 556 to 622 (GILE…FEAS). 6 residues coordinate Cu(+): Cys-388, Cys-391, Cys-491, Cys-494, Cys-567, and Cys-570. A helical transmembrane segment spans residues 646–667 (FLVSLFFCIPVMGLMIYMMVMD). The Extracellular segment spans residues 668–706 (HHLATLNHNQNMSNEEMINMHSSMFLERQILPGLSIMNL). An N-linked (GlcNAc...) asparagine glycan is attached at Asn-678. Residues 707 to 726 (LSLLLCLPVQFCGGWYFYIQ) form a helical membrane-spanning segment. Topologically, residues 727-733 (AYKALRH) are cytoplasmic. Residues 734-754 (KTANMDVLIVLATTIAFAYSL) form a helical membrane-spanning segment. Topologically, residues 755-773 (VILLVAMYERAKVNPITFF) are extracellular. Residues 774-794 (DTPPMLFVFIALGRWLEHIAK) traverse the membrane as a helical segment. Topologically, residues 795 to 927 (GKTSEALAKL…SKAPIQQFAD (133 aa)) are cytoplasmic. A helical membrane pass occupies residues 928–951 (KLSGYFVPFIVLVSIVTLLVWIII). The Extracellular segment spans residues 952–981 (GFQNFEIVEAYFPGYNRSISRTETIIRFAF). The chain crosses the membrane as a helical span at residues 982-1003 (QASITVLCIACPCSLGLATPTA). Over 1004–1348 (VMVGTGVGAQ…LSRKTVKRIR (345 aa)) the chain is Cytoplasmic. Asp-1036 functions as the 4-aspartylphosphate intermediate in the catalytic mechanism. Residue Glu-1073 coordinates ATP. The residue at position 1204 (Thr-1204) is a Phosphothreonine. Positions 1293 and 1297 each coordinate Mg(2+). Residues 1349-1366 (INFVFALIYNLIGIPIAA) traverse the membrane as a helical segment. Topologically, residues 1367 to 1377 (GVFLPIGLVLQ) are extracellular. Residues 1378-1397 (PWMGSAAMAASSVSVVLSSL) traverse the membrane as a helical segment. Residues 1398-1492 (FLKLYRKPTY…DFREDDDTTL (95 aa)) lie on the Cytoplasmic side of the membrane. Phosphoserine is present on residues Ser-1422, Ser-1424, Ser-1452, Ser-1455, and Ser-1458. Residues 1459 to 1460 (LL) carry the Endocytosis signal motif. 4 positions are modified to phosphoserine: Ser-1461, Ser-1465, Ser-1468, and Ser-1478. The tract at residues 1478–1492 (SLLVGDFREDDDTTL) is PDZD11-binding. Residues 1479-1480 (LL) carry the Endocytosis signal motif.

This sequence belongs to the cation transport ATPase (P-type) (TC 3.A.3) family. Type IB subfamily. Monomer. Interacts with PDZD11. Interacts with ATOX1 and COMMD1. Interacts with TYRP1. Directly interacts with SOD3; this interaction is copper-dependent and is required for SOD3 activity. Expressed in hippocampal neuron (at protein level). Expressed in anterior pituitary gland (at protein level).

It is found in the golgi apparatus. It localises to the trans-Golgi network membrane. Its subcellular location is the cell membrane. The protein localises to the melanosome membrane. The protein resides in the early endosome membrane. It is found in the cell projection. It localises to the axon. Its subcellular location is the dendrite. The protein localises to the postsynaptic density. It carries out the reaction Cu(+)(in) + ATP + H2O = Cu(+)(out) + ADP + phosphate + H(+). In terms of biological role, ATP-driven copper (Cu(+)) ion pump that plays an important role in intracellular copper ion homeostasis. Within a catalytic cycle, acquires Cu(+) ion from donor protein on the cytoplasmic side of the membrane and delivers it to acceptor protein on the lumenal side. The transfer of Cu(+) ion across the membrane is coupled to ATP hydrolysis and is associated with a transient phosphorylation that shifts the pump conformation from inward-facing to outward-facing state. Under physiological conditions, at low cytosolic copper concentration, it is localized at the trans-Golgi network (TGN) where it transfers Cu(+) ions to cuproenzymes of the secretory pathway. Upon elevated cytosolic copper concentrations, it relocalizes to the plasma membrane where it is responsible for the export of excess Cu(+) ions. May play a dual role in neuron function and survival by regulating cooper efflux and neuronal transmission at the synapse as well as by supplying Cu(+) ions to enzymes such as PAM, TYR and SOD3. In the melanosomes of pigmented cells, provides copper cofactor to TYR to form an active TYR holoenzyme for melanin biosynthesis. This Rattus norvegicus (Rat) protein is Copper-transporting ATPase 1.